A 736-amino-acid chain; its full sequence is Glycogen [starch] synthase, muscle (736 aa).

Residue Ser-8 is modified to Phosphoserine; by AMPK and PKA. Ser-11 is subject to Phosphoserine. Lys-39 is a binding site for UDP. Residues His-205 and Arg-211 each contribute to the UDP-alpha-D-glucose site. Alpha-D-glucose 6-phosphate is bound by residues His-291, Glu-292, Gln-294, His-297, and Lys-301. Arg-331 is a UDP binding site. Arg-331 contacts UDP-alpha-D-glucose. Phosphoserine is present on Ser-412. His-501 contacts alpha-D-glucose 6-phosphate. Positions 510, 512, and 513 each coordinate UDP-alpha-D-glucose. Thr-515 is a binding site for UDP. Positions 582 and 586 each coordinate alpha-D-glucose 6-phosphate. A disordered region spans residues 631–736 (TQGYRYPRPA…PASSLGEERN (106 aa)). Ser-641 bears the Phosphoserine; by DYRK2, GSK3-alpha, GSK3-beta and PASK mark. Phosphoserine; by GSK3-alpha and GSK3-beta occurs at positions 645 and 649. Ser-652 carries the post-translational modification Phosphoserine. Ser-653 is subject to Phosphoserine; by GSK3-alpha and GSK3-beta. Ser-657 is subject to Phosphoserine; by CK2. Residues 658–681 (EDEEEPRDLPPDEDDERYDEDEEA) are compositionally biased toward acidic residues. Positions 682–695 (AKDRRNIRAPEWPR) are enriched in basic and acidic residues. Residue Ser-698 is modified to Phosphoserine. Thr-700 carries the phosphothreonine modification. Ser-709 carries the phosphoserine modification. Positions 714–727 (PSSSVSTPSEPLSP) are enriched in low complexity. Thr-720 carries the post-translational modification Phosphothreonine. Ser-726 and Ser-730 each carry phosphoserine.

The protein belongs to the glycosyltransferase 3 family. As to quaternary structure, part of the GYS1-GYG1 complex, a heterooctamer composed of a tetramer of GYS1 and 2 dimers of GYG1, where each GYS1 protomer binds to one GYG1 subunit (via GYG1 C-terminus); the GYS1 tetramer may dissociate from GYG1 dimers to continue glycogen polymerization on its own. In terms of processing, phosphorylation at Ser-8 by AMPK inactivates the enzyme activity. Primed phosphorylation at Ser-657 (site 5) by CSNK2A1 and CSNK2A2 is required for inhibitory phosphorylation at Ser-641 (site 3a), Ser-645 (site 3b), Ser-649 (site 3c) and Ser-653 (site 4) by GSK3A an GSK3B. Phosphorylated at Ser-641 by PASK, leading to inactivation; phosphorylation by PASK is inhibited by glycogen. Phosphorylated at Ser-641 by DYRK2, leading to inactivation. Dephosphorylation at Ser-641 and Ser-645 by PP1 activates the enzyme.

It catalyses the reaction [(1-&gt;4)-alpha-D-glucosyl](n) + UDP-alpha-D-glucose = [(1-&gt;4)-alpha-D-glucosyl](n+1) + UDP + H(+). The protein operates within glycan biosynthesis; glycogen biosynthesis. Its activity is regulated as follows. Allosteric activation by glucose-6-phosphate. Phosphorylation reduces the activity towards UDP-glucose. When in the non-phosphorylated state, glycogen synthase does not require glucose-6-phosphate as an allosteric activator; when phosphorylated it does. Functionally, glycogen synthase participates in the glycogen biosynthetic process along with glycogenin and glycogen branching enzyme. Extends the primer composed of a few glucose units formed by glycogenin by adding new glucose units to it. In this context, glycogen synthase transfers the glycosyl residue from UDP-Glc to the non-reducing end of alpha-1,4-glucan. The polypeptide is Glycogen [starch] synthase, muscle (GYS1) (Bos taurus (Bovine)).